A 142-amino-acid polypeptide reads, in one-letter code: Large ribosomal subunit protein uL11 (142 aa).

It belongs to the universal ribosomal protein uL11 family. As to quaternary structure, part of the ribosomal stalk of the 50S ribosomal subunit. Interacts with L10 and the large rRNA to form the base of the stalk. L10 forms an elongated spine to which L12 dimers bind in a sequential fashion forming a multimeric L10(L12)X complex. Post-translationally, one or more lysine residues are methylated.

Forms part of the ribosomal stalk which helps the ribosome interact with GTP-bound translation factors. The protein is Large ribosomal subunit protein uL11 of Afipia carboxidovorans (strain ATCC 49405 / DSM 1227 / KCTC 32145 / OM5) (Oligotropha carboxidovorans).